The chain runs to 301 residues: Protoheme IX farnesyltransferase (301 aa).

The next 9 membrane-spanning stretches (helical) occupy residues 20-42, 55-75, 105-125, 126-146, 150-172, 176-198, 227-247, 249-269, and 280-300; these read FTEL…GMWL, VDVI…SGAF, ALMV…MTTW, QAGV…SLYA, LVSN…WFAV, FSIV…FYAI, MFFW…LGLV, VILA…GFKM, and FVYS…ISIF.

It belongs to the UbiA prenyltransferase family. Protoheme IX farnesyltransferase subfamily. In terms of assembly, interacts with CtaA.

It localises to the cell membrane. It catalyses the reaction heme b + (2E,6E)-farnesyl diphosphate + H2O = Fe(II)-heme o + diphosphate. It functions in the pathway porphyrin-containing compound metabolism; heme O biosynthesis; heme O from protoheme: step 1/1. In terms of biological role, converts heme B (protoheme IX) to heme O by substitution of the vinyl group on carbon 2 of heme B porphyrin ring with a hydroxyethyl farnesyl side group. The sequence is that of Protoheme IX farnesyltransferase from Listeria innocua serovar 6a (strain ATCC BAA-680 / CLIP 11262).